We begin with the raw amino-acid sequence, 817 residues long: Protein Jade-3 (817 aa).

The tract at residues 1–38 is disordered; it reads MKRLRNLSSSDSSDNESPSTSFSSCFQHKGKGKCTADD. Over residues 8-24 the composition is skewed to low complexity; it reads SSSDSSDNESPSTSFSS. A PHD-type 1 zinc finger spans residues 202 to 252; the sequence is DVICDVCRSPDSEEGNDMVFCDRCNICVHQACYGILKVPEGSWLCRTCVLG. Residues 254-288 form a C2HC pre-PHD-type zinc finger; that stretch reads HPQCILCPKTGGAMKATRTGTKWAHVSCALWIPEV. Residues 312–368 form a PHD-type 2 zinc finger; that stretch reads LVCSLCKLKTGACIQCSVKSCITAFHVTCAFEHSLEMKTILDEGDEVKFKSYCLKHS. Disordered stretches follow at residues 375–396, 665–689, and 719–817; these read ISEQ…SERT, NGVL…QNSE, and LVRT…SVQR. Residues 379–396 show a composition bias toward basic and acidic residues; that stretch reads EEPHKTHSDNRPTESERT. The span at 667–689 shows a compositional bias: polar residues; sequence VLSSGDRTQRDSSSQTSPGQNSE. Over residues 722–743 the composition is skewed to basic and acidic residues; it reads TTEDLRSSEKPQRRQSVKERLW. A compositionally biased stretch (polar residues) spans 747 to 758; sequence PADTQTSGTPYQ. Residues 777–799 show a composition bias toward basic and acidic residues; it reads DENKDHMLLRRNSRESPNRDSCR. The span at 801–810 shows a compositional bias: basic residues; the sequence is SRIRGKRKMT.

It belongs to the JADE family. Component of the HBO1 complex.

In terms of biological role, scaffold subunit of some HBO1 complexes, which have a histone H4 acetyltransferase activity. The protein is Protein Jade-3 (jade3) of Xenopus tropicalis (Western clawed frog).